A 506-amino-acid polypeptide reads, in one-letter code: MEEIQRYLQLERSQQHDFLYPLIFQEYIYAFAHDRDFGRSILSENLGYDSKSSLLVVKRLISRMYQQNRFILSLDDSNQNPFWTCNNNFYSQTVSEGFAFIVEIPFSLRFKSCLEEKKIVNSQNLRSIHSIFPFLEDNFAHLNYILDILIPHPVHVEILVQNLRHWLKDASSLHLLRFLLNEYWNWNSLITPKKASSSFSKKNQRLFLLLYNSHVCEYEYFFVFIRNQSSHLRSTSSGVFLERIYFYEKIERLVNIFIKVKDLQANLWLVKEPCMHYVRYQRKSILASKGTSVLMNKWKCYLVTFWQWHFSLWFHPRRIYINQLSNHSLEFLGYLSSVRMNPSVVRSQILENSFLINNAIKKLETLVPIFLLIASLAKAKFCNVLGHPISKPVWADLSDSNIIDRFGRISKNLSHYYSGSSKKKSLYRVKYILRLSCARTLARKHKSTVRAFLKRLGSELLEEFLMTEEDILSLTFPKPSSALRGVYRSRIWYLDIIWINDLANYK.

Belongs to the intron maturase 2 family. MatK subfamily.

Its subcellular location is the plastid. It is found in the chloroplast. Usually encoded in the trnK tRNA gene intron. Probably assists in splicing its own and other chloroplast group II introns. The polypeptide is Maturase K (Artanema fimbriatum).